The chain runs to 167 residues: S-ribosylhomocysteine lyase (167 aa).

Fe cation-binding residues include His-54, His-58, and Cys-128.

The protein belongs to the LuxS family. As to quaternary structure, homodimer. Requires Fe cation as cofactor.

The catalysed reaction is S-(5-deoxy-D-ribos-5-yl)-L-homocysteine = (S)-4,5-dihydroxypentane-2,3-dione + L-homocysteine. Involved in the synthesis of autoinducer 2 (AI-2) which is secreted by bacteria and is used to communicate both the cell density and the metabolic potential of the environment. The regulation of gene expression in response to changes in cell density is called quorum sensing. Catalyzes the transformation of S-ribosylhomocysteine (RHC) to homocysteine (HC) and 4,5-dihydroxy-2,3-pentadione (DPD). This is S-ribosylhomocysteine lyase from Sulfurimonas denitrificans (strain ATCC 33889 / DSM 1251) (Thiomicrospira denitrificans (strain ATCC 33889 / DSM 1251)).